The chain runs to 469 residues: Pup--protein ligase (469 aa).

Mg(2+) is bound at residue Glu9. Residue Arg53 coordinates ATP. Tyr55 lines the Mg(2+) pocket. Asp57 functions as the Proton acceptor in the catalytic mechanism. Glu63 serves as a coordination point for Mg(2+). ATP-binding residues include Thr66 and Trp430.

It belongs to the Pup ligase/Pup deamidase family. Pup-conjugating enzyme subfamily.

It carries out the reaction ATP + [prokaryotic ubiquitin-like protein]-L-glutamate + [protein]-L-lysine = ADP + phosphate + N(6)-([prokaryotic ubiquitin-like protein]-gamma-L-glutamyl)-[protein]-L-lysine.. It functions in the pathway protein degradation; proteasomal Pup-dependent pathway. The protein operates within protein modification; protein pupylation. Catalyzes the covalent attachment of the prokaryotic ubiquitin-like protein modifier Pup to the proteasomal substrate proteins, thereby targeting them for proteasomal degradation. This tagging system is termed pupylation. The ligation reaction involves the side-chain carboxylate of the C-terminal glutamate of Pup and the side-chain amino group of a substrate lysine. The chain is Pup--protein ligase from Kocuria rhizophila (strain ATCC 9341 / DSM 348 / NBRC 103217 / DC2201).